Here is a 254-residue protein sequence, read N- to C-terminus: Alcohol dehydrogenase (254 aa).

10–33 (FVAGLGGIGLDTNREIVKSGPKNL) is a binding site for NAD(+). Serine 138 is a substrate binding site. Residue tyrosine 151 is the Proton acceptor of the active site.

The protein belongs to the short-chain dehydrogenases/reductases (SDR) family. In terms of assembly, homodimer.

It catalyses the reaction a primary alcohol + NAD(+) = an aldehyde + NADH + H(+). The enzyme catalyses a secondary alcohol + NAD(+) = a ketone + NADH + H(+). The polypeptide is Alcohol dehydrogenase (Adh) (Scaptomyza albovittata (Fruit fly)).